Reading from the N-terminus, the 213-residue chain is Orotidine 5'-phosphate decarboxylase (213 aa).

Substrate is bound by residues Asp11, Lys33, 61 to 70, Ser113, 166 to 176, Gly189, and Arg190; these read DLKLADIPNT and PGVGAQGGKAS. Residue Lys63 is the Proton donor of the active site.

It belongs to the OMP decarboxylase family. Type 1 subfamily. Homodimer.

The catalysed reaction is orotidine 5'-phosphate + H(+) = UMP + CO2. Its pathway is pyrimidine metabolism; UMP biosynthesis via de novo pathway; UMP from orotate: step 2/2. In terms of biological role, catalyzes the decarboxylation of orotidine 5'-monophosphate (OMP) to uridine 5'-monophosphate (UMP). In Thermococcus kodakarensis (strain ATCC BAA-918 / JCM 12380 / KOD1) (Pyrococcus kodakaraensis (strain KOD1)), this protein is Orotidine 5'-phosphate decarboxylase.